The following is a 441-amino-acid chain: MSKVTHQPKIGFVSLGCPKNLVDSERILTELRTEGYDVVPSYDDADMVIVNTCGFIDSAVQESLEAIGEALNENGKVIVTGCLGAKEDQIREVHPKVLEITGPHSYEQVLEHVHHYVPKPKHNPFLSLVPEQGVKLTPRHYAYLKISEGCNHRCTFCIIPSMRGDLVSRPIGDVLSEAKRLVDAGVKEILVISQDTSAYGVDVKHRTGFYNGEPVKTSMVSLCEQLSKLGIWTRLHYVYPYPHVDDVIPLMAEGKILPYLDIPLQHASPRILKLMKRPGSVDRQLARIKQWREICPELTLRSTFIVGFPGETEEDFQMLLDFLKEARLDRVGCFKYSPVEGADANALPDQVPEEVKEERWNRFMQLQQQISAERLQEKVGKEILVIIDEVDDEGAIGRSMADAPEIDGAVYLNGESNVKPGDIVRVKVEHADEYDLWGSRV.

The MTTase N-terminal domain occupies 8 to 118; that stretch reads PKIGFVSLGC…VLEHVHHYVP (111 aa). 6 residues coordinate [4Fe-4S] cluster: C17, C53, C82, C150, C154, and C157. One can recognise a Radical SAM core domain in the interval 136 to 373; sequence LTPRHYAYLK…MQLQQQISAE (238 aa). The 66-residue stretch at 376–441 folds into the TRAM domain; sequence QEKVGKEILV…DEYDLWGSRV (66 aa).

It belongs to the methylthiotransferase family. RimO subfamily. [4Fe-4S] cluster serves as cofactor.

Its subcellular location is the cytoplasm. It catalyses the reaction L-aspartate(89)-[ribosomal protein uS12]-hydrogen + (sulfur carrier)-SH + AH2 + 2 S-adenosyl-L-methionine = 3-methylsulfanyl-L-aspartate(89)-[ribosomal protein uS12]-hydrogen + (sulfur carrier)-H + 5'-deoxyadenosine + L-methionine + A + S-adenosyl-L-homocysteine + 2 H(+). Catalyzes the methylthiolation of an aspartic acid residue of ribosomal protein uS12. This Escherichia fergusonii (strain ATCC 35469 / DSM 13698 / CCUG 18766 / IAM 14443 / JCM 21226 / LMG 7866 / NBRC 102419 / NCTC 12128 / CDC 0568-73) protein is Ribosomal protein uS12 methylthiotransferase RimO.